The chain runs to 666 residues: Nuclear distribution protein nudE homolog 1 (666 aa).

A coiled-coil region spans residues 14 to 195; sequence EEEIAHYREK…KDQLARAIAT (182 aa). Disordered regions lie at residues 40–64, 220–310, 369–388, and 397–666; these read EFQQ…KQQA, DDIN…SGIP, KRVT…PAPH, and DHNT…KVKK. Positions 251–274 are enriched in polar residues; the sequence is RSGTMSSIPVASPSTKRFSQQIPH. Composition is skewed to low complexity over residues 275-287 and 372-383; these read SPSF…STTS and TSTTSTTSSTTT. Residues 400–410 are compositionally biased toward polar residues; the sequence is TTPTAQSQQFP. Composition is skewed to low complexity over residues 449–465, 473–485, and 536–554; these read PTFR…LPSR, ASGS…SGTA, and SATP…STSN. Polar residues-rich tracts occupy residues 587-599 and 614-638; these read RQSL…TPTT and SSLS…SGRP.

The protein belongs to the nudE family. In terms of assembly, self-associates. Interacts with PAC1.

It is found in the cytoplasm. The protein localises to the cytoskeleton. Its function is as follows. Required for nuclear migration. The protein is Nuclear distribution protein nudE homolog 1 (NDE1) of Cryptococcus neoformans var. neoformans serotype D (strain JEC21 / ATCC MYA-565) (Filobasidiella neoformans).